The following is a 214-amino-acid chain: MRDAYLMMVLMDALKEIFDLKEILKSPIRNKKVILFVSLVFILSLVLLYILVVNIKYFSYLGDIIFQNFQKHVENLKITLNEDNLHIILAIWKNNLTVCILNYILGIFSLFVIAVNSYILSYVLYKFGAESFIYLVLPHGIIEIPALILSASGGVLFNMGLVNFLINIKFGTKREVLYYIKESLKLLILSIILFIVAGIVEGTITFKIAKIMFS.

The next 5 membrane-spanning stretches (helical) occupy residues valine 33–valine 53, isoleucine 104–leucine 124, phenylalanine 132–serine 152, glycine 153–lysine 173, and leucine 186–phenylalanine 206.

It localises to the cell membrane. This is an uncharacterized protein from Methanocaldococcus jannaschii (strain ATCC 43067 / DSM 2661 / JAL-1 / JCM 10045 / NBRC 100440) (Methanococcus jannaschii).